A 368-amino-acid polypeptide reads, in one-letter code: Protein ALTERED XYLOGLUCAN 9 (368 aa).

Over 1–32 the chain is Cytoplasmic; that stretch reads MLGAIHLGVLAACFVLFVPMAMAGWHLSRNKM. Residues 33 to 53 form a helical membrane-spanning segment; sequence LFFSGALFISLAVCVHLTPYF. Topologically, residues 54 to 368 are lumenal; that stretch reads PSVSDIVASV…ALLIESHQSL (315 aa). Asn99, Asn137, and Asn235 each carry an N-linked (GlcNAc...) asparagine glycan.

The protein resides in the golgi apparatus membrane. Component of the plant cell wall polysaccharide acetylation pathway. Does not directly catalyze O-acetylation of xyloglucan but exhibits weak acetylesterase activity in vitro. The chain is Protein ALTERED XYLOGLUCAN 9 from Arabidopsis thaliana (Mouse-ear cress).